Here is a 309-residue protein sequence, read N- to C-terminus: tRNA dimethylallyltransferase (309 aa).

13-20 (GPTAVGKS) provides a ligand contact to ATP. 15-20 (TAVGKS) is a binding site for substrate.

This sequence belongs to the IPP transferase family. As to quaternary structure, monomer. Mg(2+) serves as cofactor.

The enzyme catalyses adenosine(37) in tRNA + dimethylallyl diphosphate = N(6)-dimethylallyladenosine(37) in tRNA + diphosphate. Functionally, catalyzes the transfer of a dimethylallyl group onto the adenine at position 37 in tRNAs that read codons beginning with uridine, leading to the formation of N6-(dimethylallyl)adenosine (i(6)A). In Lacticaseibacillus casei (strain BL23) (Lactobacillus casei), this protein is tRNA dimethylallyltransferase.